A 394-amino-acid chain; its full sequence is MTQLETRTEPMVVNFGPHHPSMHGVLRLVVTLDGEDVVDCEPVIGYLHRGMEKIAENRTNVMYVPYVSRMDYAAGMFYEAIVVNAPERLANIPVPKRASYIRVLMLELNRIANHLLWLGPFLADVGAQTPFFYIFREREMIYDLWEAATGQRLINNNYFRIGGVAADLPWGWLEKCKDFCDWFGPKIDEYEKLITNNPIFRRRIEGLGVIGREEAINWSLSGPMLRASGVPWDLRKVDHYECYDDFDWDVASEKEGDCFARYRVRIEEMRQSLKILRQACDMIPGGPTENLEAHRMAEGKDSAFAGFDYQYVAKKVAPTFKIPNGELYSRLESGKGEIGVFIQGNNDVTPWRFKIRAADSNNLQILPHILKGHKVADIMAILGSIDVIMGSVDR.

The protein belongs to the complex I 49 kDa subunit family. As to quaternary structure, NDH-1 can be composed of about 15 different subunits; different subcomplexes with different compositions have been identified which probably have different functions.

The protein localises to the cellular thylakoid membrane. The enzyme catalyses a plastoquinone + NADH + (n+1) H(+)(in) = a plastoquinol + NAD(+) + n H(+)(out). It catalyses the reaction a plastoquinone + NADPH + (n+1) H(+)(in) = a plastoquinol + NADP(+) + n H(+)(out). Functionally, NDH-1 shuttles electrons from an unknown electron donor, via FMN and iron-sulfur (Fe-S) centers, to quinones in the respiratory and/or the photosynthetic chain. The immediate electron acceptor for the enzyme in this species is believed to be plastoquinone. Couples the redox reaction to proton translocation, and thus conserves the redox energy in a proton gradient. Cyanobacterial NDH-1 also plays a role in inorganic carbon-concentration. The protein is NAD(P)H-quinone oxidoreductase subunit H of Synechococcus sp. (strain CC9311).